The primary structure comprises 257 residues: MAPITEEVVHGLKDMIEKLENRVQELEGRLGGESKPKSIAEQMRIVLMGPPGAGKGTQAPRLKEKYCVCHLATGDMLRSQVAKKTELGKEAKKIMDQGGLVSDEIMVNMIKNELDTNTECKNGFILDGFPRTVAQAERLDDMLEARKQKLQHAIELQIDDALLVARITGRLVHPASGRSYHKIFNPPKNDMKDDVTGEPLIQRSDDNAETLKKRLSTYHAQTAPVVEYYKKTGIWRGIDASQEPGQVWKSLLGVFQK.

52–57 (GAGKGT) contributes to the ATP binding site. Residues 72 to 101 (ATGDMLRSQVAKKTELGKEAKKIMDQGGLV) form an NMP region. Residues Thr-73, Arg-78, 99 to 101 (GLV), 128 to 131 (GFPR), and Gln-135 each bind AMP. Positions 169 to 206 (GRLVHPASGRSYHKIFNPPKNDMKDDVTGEPLIQRSDD) are LID. Residues Arg-170 and 179–180 (SY) contribute to the ATP site. The AMP site is built by Arg-203 and Arg-214. Gln-242 is a binding site for ATP.

Belongs to the adenylate kinase family. AK2 subfamily. Monomer.

It localises to the cytoplasm. Its subcellular location is the cytosol. The protein localises to the mitochondrion intermembrane space. The enzyme catalyses AMP + ATP = 2 ADP. In terms of biological role, catalyzes the reversible transfer of the terminal phosphate group between ATP and AMP. Plays an important role in cellular energy homeostasis and in adenine nucleotide metabolism. Adenylate kinase activity is critical for regulation of the phosphate utilization and the AMP de novo biosynthesis pathways. In Neosartorya fischeri (strain ATCC 1020 / DSM 3700 / CBS 544.65 / FGSC A1164 / JCM 1740 / NRRL 181 / WB 181) (Aspergillus fischerianus), this protein is Adenylate kinase (adk1).